Reading from the N-terminus, the 106-residue chain is Iron-sulfur cluster assembly protein CyaY (106 aa).

It belongs to the frataxin family.

Its function is as follows. Involved in iron-sulfur (Fe-S) cluster assembly. May act as a regulator of Fe-S biogenesis. This is Iron-sulfur cluster assembly protein CyaY from Salmonella paratyphi B (strain ATCC BAA-1250 / SPB7).